Consider the following 146-residue polypeptide: Hemoglobin subunit beta-2 (146 aa).

The Globin domain maps to 2–146 (FLSAEEKGLV…VASALAHRYH (145 aa)). Residue K17 is modified to N6-succinyllysine. 2 positions are modified to phosphoserine: S44 and S50. The residue at position 59 (K59) is an N6-succinyllysine. H63 and H92 together coordinate heme b. R104 is modified (asymmetric dimethylarginine).

Belongs to the globin family. In terms of assembly, heterotetramer of two alpha chains and two beta chains. Red blood cells.

Its function is as follows. Involved in oxygen transport from the lung to the various peripheral tissues. The sequence is that of Hemoglobin subunit beta-2 (HBB2) from Panthera pardus saxicolor (Northern Persian leopard).